The following is a 413-amino-acid chain: Probable protein S-acyltransferase 3 (413 aa).

A run of 2 helical transmembrane segments spans residues 65-85 and 96-116; these read LTSFLIGAPALTFCIRMLVWI and VLASGFILTLLDFTFLMLTSA. Positions 171–221 constitute a DHHC domain; that stretch reads KFCDTCLLYRPPRASHCSICNNCVQRFDHHCPWVGQCIARRNYPFFICFIS. The active-site S-palmitoyl cysteine intermediate is C201. The next 2 helical transmembrane spans lie at 216 to 236 and 255 to 275; these read FICFISSSTLLCIYVFVFSWI and SVILIVYTFVAVWFVGGLTIF. Residues 364-413 form a disordered region; that stretch reads RDSPRKLPLPTRNLDDIKDISDNYDRSTTTREDASDRDPSFFSSQLDLPK. Over residues 376–402 the composition is skewed to basic and acidic residues; it reads NLDDIKDISDNYDRSTTTREDASDRDP. Residues 404–413 show a composition bias toward polar residues; the sequence is FFSSQLDLPK.

The protein belongs to the DHHC palmitoyltransferase family. As to expression, expressed in flowers and pollen.

Its subcellular location is the endoplasmic reticulum membrane. It localises to the cytoplasmic vesicle membrane. It carries out the reaction L-cysteinyl-[protein] + hexadecanoyl-CoA = S-hexadecanoyl-L-cysteinyl-[protein] + CoA. In terms of biological role, palmitoyl acyltransferase. This is Probable protein S-acyltransferase 3 (PAT03) from Arabidopsis thaliana (Mouse-ear cress).